The sequence spans 489 residues: Beta-1,3-glucosyltransferase (489 aa).

Met1 is a topological domain (cytoplasmic). The chain crosses the membrane as a helical; Signal-anchor for type II membrane protein span at residues 2–22; it reads RPPALLALFSCSAAFALMSEE. Residues 23–489 are Lumenal-facing; the sequence is IKEKVTPSQD…ETQKDPREEL (467 aa). Residue Asn78 is glycosylated (N-linked (GlcNAc...) asparagine). Residues 486–489 carry the Prevents secretion from ER motif; that stretch reads REEL.

Belongs to the glycosyltransferase 31 family.

Its subcellular location is the endoplasmic reticulum membrane. It participates in protein modification; protein glycosylation. O-glucosyltransferase that transfers glucose toward fucose with a beta-1,3 linkage. Specifically glucosylates O-linked fucosylglycan on TSP type-1 domains of proteins, thereby contributing to elongation of O-fucosylglycan. The chain is Beta-1,3-glucosyltransferase from Mus musculus (Mouse).